The sequence spans 444 residues: MAEETQVLVKFVTKLPAHLRVPETPVAVPSDLKRYGLSQIINHLLALDPPRPFDFLIDGELVRKSLEQHLLAHNLSAESTLEVEYVPAVVPPQQKNSTPHDDWVSSVDGSRCAPASSSGGSPSGVVVSGSYDGLLRLWNGDLEAVASVSAHAGGVNCVRFLPKSQGDLLLTSGKDRLVKMWQLSSSEEEDAGPSCRLVATYRGHEDGVEAVAASPSGRRFASCGWDGKLLVWEGGEQLRWAAGTAEASKKKRKTGTANGSAAAGAGGADLRGHLHCVSSVAWPAENSLFSGGWDHSVRRWDVSSGAAADTYNGSKAVLCIASHAASPALVAFGCSDRALRLWDTRGKAGSDALAVTTQGAHGGWVTAVAWCPSSQHHIASASHDGTIKMWDIRTQIPLGMLSHHTDKVLALGWLGGAEAGHARGLVSGGADCQLRMYESDYIVS.

The interval 7–87 (VLVKFVTKLP…ESTLEVEYVP (81 aa)) is ubiquitin-like (UBL) domain. A disordered region spans residues 91–123 (PPQQKNSTPHDDWVSSVDGSRCAPASSSGGSPS). WD repeat units lie at residues 105-148 (SSVD…VASV), 150-191 (AHAG…EEDA), and 203-242 (GHED…RWAA). Positions 243–264 (GTAEASKKKRKTGTANGSAAAG) are disordered. 4 WD repeats span residues 272 to 310 (GHLH…AADT), 312 to 352 (NGSK…GSDA), 360 to 400 (AHGG…PLGM), and 403 to 444 (HHTD…YIVS).

This sequence belongs to the WD repeat WDR12/YTM1 family.

It is found in the nucleus. The protein resides in the nucleolus. Its subcellular location is the nucleoplasm. Its function is as follows. Required for maturation of ribosomal RNAs and formation of the large ribosomal subunit. This is Ribosome biogenesis protein WDR12 homolog from Chlamydomonas reinhardtii (Chlamydomonas smithii).